The primary structure comprises 391 residues: Phosphoprotein (391 aa).

The interval 1-194 is N-terminus domain; it reads MDQFIKQDET…GSLSGATLYA (194 aa). Phosphothreonine is present on residues Thr10, Thr16, Thr91, Thr150, and Thr165. Ser188 carries the post-translational modification Phosphoserine. Residues 216–279 form a multimerization region; that stretch reads ISANEIMDLL…MATVKIMDPG (64 aa). Positions 218 to 245 form a coiled coil; it reads ANEIMDLLRGMDARLQHLEQKVDKVLAQ. Thr250 is subject to Phosphothreonine. Ser257 is modified (phosphoserine). A phosphothreonine mark is found at Thr258 and Thr282. Phosphoserine is present on residues Ser292 and Ser294. A Phosphothreonine modification is found at Thr298. 2 positions are modified to phosphoserine: Ser301 and Ser374. Residues 343 to 391 are interaction with the nucleoprotein; that stretch reads AGQKVMITKMITDCVANPQMKQAFEQRLAKASTEDALNDIKRDIIRSAI. Thr375 bears the Phosphothreonine mark.

It belongs to the rubulavirus/avulavirus P protein family. As to quaternary structure, homotetramer. Interacts (via multimerization domain) with polymerase L; this interaction forms the polymerase L-P complex. Interacts (via N-terminus) with N0 (via Ncore); this interaction allows P to chaperon N0 to avoid N polymerization before encapsidation. Interacts (via C-terminus) with N-RNA template; this interaction positions the polymerase on the template for both transcription and replication. Interacts with host RPS6KB1 kinase; this interaction may play a role in the viral replication and transcription.

Its subcellular location is the virion. Its function is as follows. Essential cofactor of the RNA polymerase L that plays a central role in the transcription and replication by forming the polymerase complex with RNA polymerase L and recruiting L to the genomic N-RNA template for RNA synthesis. Also plays a central role in the encapsidation of nascent RNA chains by forming the encapsidation complex with the nucleocapsid protein N (N-P complex). Acts as a chaperone for newly synthesized free N protein, so-called N0, allowing encapsidation of nascent RNA chains during replication. The nucleoprotein protein N prevents excessive phosphorylation of P, which leads to down-regulation of viral transcription/ replication. Participates, together with N, in the formation of viral factories (viroplasms), which are large inclusions in the host cytoplasm where replication takes place. This chain is Phosphoprotein, found in Homo sapiens (Human).